Here is a 610-residue protein sequence, read N- to C-terminus: Membrane protein insertase YidC (610 aa).

The chain crosses the membrane as a helical span at residues 7-27 (FFITIALSILILALWQVFYLG). The disordered stretch occupies residues 36-82 (QARIEEQQRQAQQAAQNRQASSSTGDTPQMPANPDSIPGQGDTKAAG). Residues 44 to 55 (RQAQQAAQNRQA) show a composition bias toward low complexity. The next 5 membrane-spanning stretches (helical) occupy residues 358–378 (FDLL…FYLI), 387–407 (NFGV…FPLA), 458–478 (WPVL…YVTI), 510–530 (TVPH…TMFL), and 546–566 (IFTW…AGLV).

This sequence belongs to the OXA1/ALB3/YidC family. Type 1 subfamily. As to quaternary structure, interacts with the Sec translocase complex via SecD. Specifically interacts with transmembrane segments of nascent integral membrane proteins during membrane integration.

It is found in the cell inner membrane. In terms of biological role, required for the insertion and/or proper folding and/or complex formation of integral membrane proteins into the membrane. Involved in integration of membrane proteins that insert both dependently and independently of the Sec translocase complex, as well as at least some lipoproteins. Aids folding of multispanning membrane proteins. This chain is Membrane protein insertase YidC, found in Brucella suis biovar 1 (strain 1330).